The following is a 78-amino-acid chain: Hainantoxin-XX (78 aa).

A signal peptide spans 1-23 (MKSATLLALSFLLIALYFLICEA). Positions 24–47 (EHSRYEEHEILEENMGDVVNLEQR) are excised as a propeptide. Intrachain disulfides connect C49-C62, C56-C66, and C61-C77.

Belongs to the hainantoxin family. 20 subfamily. As to expression, expressed by the venom gland.

The protein localises to the secreted. Putative ion channel inhibitor. This Cyriopagopus hainanus (Chinese bird spider) protein is Hainantoxin-XX.